Reading from the N-terminus, the 148-residue chain is SsrA-binding protein (148 aa).

Over residues 129-142 the composition is skewed to basic and acidic residues; that stretch reads ETEKKRDWEREKAR. The tract at residues 129–148 is disordered; the sequence is ETEKKRDWEREKARIMRAGT.

The protein belongs to the SmpB family.

The protein resides in the cytoplasm. Its function is as follows. Required for rescue of stalled ribosomes mediated by trans-translation. Binds to transfer-messenger RNA (tmRNA), required for stable association of tmRNA with ribosomes. tmRNA and SmpB together mimic tRNA shape, replacing the anticodon stem-loop with SmpB. tmRNA is encoded by the ssrA gene; the 2 termini fold to resemble tRNA(Ala) and it encodes a 'tag peptide', a short internal open reading frame. During trans-translation Ala-aminoacylated tmRNA acts like a tRNA, entering the A-site of stalled ribosomes, displacing the stalled mRNA. The ribosome then switches to translate the ORF on the tmRNA; the nascent peptide is terminated with the 'tag peptide' encoded by the tmRNA and targeted for degradation. The ribosome is freed to recommence translation, which seems to be the essential function of trans-translation. This is SsrA-binding protein from Burkholderia lata (strain ATCC 17760 / DSM 23089 / LMG 22485 / NCIMB 9086 / R18194 / 383).